The following is a 103-amino-acid chain: uncharacterized protein (103 aa).

Residues 33–57 (GYVAAIVAGPVSMSPLDWICPLLAI) form a helical membrane-spanning segment.

The protein resides in the membrane. This is an uncharacterized protein from Sinorhizobium fredii (strain NBRC 101917 / NGR234).